The sequence spans 327 residues: 3' cyclic ADP-D-ribose synthase AaTIR (327 aa).

The interval 10–120 is TIR domain; it reads VALSFAGENR…GILKTIGYIN (111 aa). Lys229 is a catalytic residue.

In terms of assembly, homodimer.

It catalyses the reaction NADP(+) + H2O = ADP-D-ribose 2'-phosphate + nicotinamide + H(+). The catalysed reaction is NAD(+) = 3'cADPR + nicotinamide + H(+). In terms of biological role, NAD(+) hydrolase (NADase) that generates 3'cADPR, a cyclization variant of cyclic ADP-D-ribose (also called v2-cADPR). Also cleaves NADP(+), but does not cyclize the product. The sequence is that of 3' cyclic ADP-D-ribose synthase AaTIR from Aquimarina amphilecti.